The chain runs to 97 residues: YcgL domain-containing protein Psyr_1564 (97 aa).

One can recognise a YcgL domain in the interval 3–87 (RICSIYRSPK…AEDDYIEHLP (85 aa)).

The chain is YcgL domain-containing protein Psyr_1564 from Pseudomonas syringae pv. syringae (strain B728a).